The primary structure comprises 335 residues: MTSLLDQLSSMTVVVADTGDLEAIRTFKPQDATTNPSLILAAAQIPAYQNLIDKSLQASRQRVGSFASAKEVVDEALDEVCVTFGKEILKIIPGRVSTEVDARLSFNTQATINKARKIIDLYKKVDISKERVLIKVASTWEGIKAAEVLESEGIHCNLTLLFGFSQAVACAEAGVTLISPFVGRILDWYKAETGKDSYAGEEDPGVVSVTKIFNYYKSNNYKTEVMGASFRNIDEILELAGCDLLTIAPKFLEQLENSDSKLTRKLDSLKPLPSETKIHLEEYDFRNMLKLDRMATEKLEEGIINFSKAIEQLEQLLSKRLSYIESGSNAELSIA.

Residue lysine 135 is the Schiff-base intermediate with substrate of the active site.

This sequence belongs to the transaldolase family. Type 1 subfamily. As to quaternary structure, homodimer.

The protein resides in the cytoplasm. The catalysed reaction is D-sedoheptulose 7-phosphate + D-glyceraldehyde 3-phosphate = D-erythrose 4-phosphate + beta-D-fructose 6-phosphate. It participates in carbohydrate degradation; pentose phosphate pathway; D-glyceraldehyde 3-phosphate and beta-D-fructose 6-phosphate from D-ribose 5-phosphate and D-xylulose 5-phosphate (non-oxidative stage): step 2/3. Functionally, transaldolase is important for the balance of metabolites in the pentose-phosphate pathway. In Prochlorococcus marinus (strain SARG / CCMP1375 / SS120), this protein is Transaldolase.